A 138-amino-acid polypeptide reads, in one-letter code: Translation initiation factor 2 subunit beta (138 aa).

Belongs to the eIF-2-beta/eIF-5 family. As to quaternary structure, heterotrimer composed of an alpha, a beta and a gamma chain.

EIF-2 functions in the early steps of protein synthesis by forming a ternary complex with GTP and initiator tRNA. The polypeptide is Translation initiation factor 2 subunit beta (Methanococcus vannielii (strain ATCC 35089 / DSM 1224 / JCM 13029 / OCM 148 / SB)).